Consider the following 621-residue polypeptide: 1,4-alpha-glucan branching enzyme GlgB (621 aa).

Aspartate 302 (nucleophile) is an active-site residue. The Proton donor role is filled by glutamate 355.

The protein belongs to the glycosyl hydrolase 13 family. GlgB subfamily. In terms of assembly, monomer.

It carries out the reaction Transfers a segment of a (1-&gt;4)-alpha-D-glucan chain to a primary hydroxy group in a similar glucan chain.. It functions in the pathway glycan biosynthesis; glycogen biosynthesis. In terms of biological role, catalyzes the formation of the alpha-1,6-glucosidic linkages in glycogen by scission of a 1,4-alpha-linked oligosaccharide from growing alpha-1,4-glucan chains and the subsequent attachment of the oligosaccharide to the alpha-1,6 position. This is 1,4-alpha-glucan branching enzyme GlgB from Dechloromonas aromatica (strain RCB).